The chain runs to 188 residues: MEKEDLGLEITELRLGLPGAGGENNTDKDKNKNKKRVFSDIEGENSSSEEDGKKETKNQVVGWPPVCSYRKKNTVNEPKLYVKVSMDGAPFLRKIDLAMHKGYSDLAFALDKFFGCYGICEALKDAENAEHVPIYEDKDGDWMLVGDVPWEMFRESCKRLRIMKRSDAKGFDLQPKGSLKGFIEGVRK.

The short motif at 13–17 is the EAR-like (transcriptional repression) element; it reads LRLGL. Positions 16–57 are disordered; the sequence is GLPGAGGENNTDKDKNKNKKRVFSDIEGENSSSEEDGKKETK. One can recognise a PB1 domain in the interval 79 to 167; sequence KLYVKVSMDG…KRLRIMKRSD (89 aa).

The protein belongs to the Aux/IAA family. As to quaternary structure, homodimers and heterodimers.

It localises to the nucleus. In terms of biological role, aux/IAA proteins are short-lived transcriptional factors that function as repressors of early auxin response genes at low auxin concentrations. Repression is thought to result from the interaction with auxin response factors (ARFs), proteins that bind to the auxin-responsive promoter element (AuxRE). Formation of heterodimers with ARF proteins may alter their ability to modulate early auxin response genes expression. This is Auxin-induced protein 22C (AUX22C) from Vigna radiata var. radiata (Mung bean).